Reading from the N-terminus, the 316-residue chain is Apolipoprotein E (316 aa).

Residues 1-18 form the signal peptide; that stretch reads MKVLWVALVVALLAGCQA. Repeat copies occupy residues 79 to 100, 101 to 122, 123 to 144, 145 to 166, 167 to 188, 189 to 210, 211 to 232, and 233 to 254. An 8 X 22 AA approximate tandem repeats region spans residues 79-254; that stretch reads VLMEETMKEV…RLDKMRQQLE (176 aa). Residue Met142 is modified to Methionine sulfoxide. Position 146 is a phosphoserine (Ser146). The interval 157–167 is LDL and other lipoprotein receptors binding; that stretch reads HLRKLRKRLLR. A heparin-binding site is contributed by 161–164; the sequence is LRKR. The lipid-binding and lipoprotein association stretch occupies residues 209 to 289; it reads AATLSTQVGQ…SWFEPLVEDM (81 aa). An O-linked (GalNAc...) threonine glycan is attached at Thr211. Residue 228-235 participates in heparin binding; the sequence is RQKLHGRL. The segment at 265-316 is homooligomerization; sequence SQIRLQAEAFQARLRSWFEPLVEDMQRQWAGLVEKVQLALHLSPTSPPSENH. The tract at residues 277–289 is specificity for association with VLDL; sequence RLRSWFEPLVEDM.

This sequence belongs to the apolipoprotein A1/A4/E family. In terms of assembly, homotetramer. May interact with ABCA1; functionally associated with ABCA1 in the biogenesis of HDLs. May interact with APP/A4 amyloid-beta peptide; the interaction is extremely stable in vitro but its physiological significance is unclear. May interact with MAPT. May interact with MAP2. In the cerebrospinal fluid, interacts with secreted SORL1. Interacts with PMEL; this allows the loading of PMEL luminal fragment on ILVs to induce fibril nucleation. In terms of processing, APOE exists as multiple glycosylated and sialylated glycoforms within cells and in plasma. The extent of glycosylation and sialylation are tissue and context specific. Glycated in plasma VLDL. Post-translationally, phosphorylated by FAM20C in the extracellular medium.

The protein localises to the secreted. The protein resides in the extracellular space. Its subcellular location is the extracellular matrix. It localises to the extracellular vesicle. It is found in the endosome. The protein localises to the multivesicular body. Its function is as follows. APOE is an apolipoprotein, a protein associating with lipid particles, that mainly functions in lipoprotein-mediated lipid transport between organs via the plasma and interstitial fluids. APOE is a core component of plasma lipoproteins and is involved in their production, conversion and clearance. Apolipoproteins are amphipathic molecules that interact both with lipids of the lipoprotein particle core and the aqueous environment of the plasma. As such, APOE associates with chylomicrons, chylomicron remnants, very low density lipoproteins (VLDL) and intermediate density lipoproteins (IDL) but shows a preferential binding to high-density lipoproteins (HDL). It also binds a wide range of cellular receptors including the LDL receptor/LDLR and the very low-density lipoprotein receptor/VLDLR that mediate the cellular uptake of the APOE-containing lipoprotein particles. Finally, APOE also has a heparin-binding activity and binds heparan-sulfate proteoglycans on the surface of cells, a property that supports the capture and the receptor-mediated uptake of APOE-containing lipoproteins by cells. This Ovis aries musimon (Mouflon) protein is Apolipoprotein E (APOE).